A 169-amino-acid polypeptide reads, in one-letter code: Peptide deformylase 1 (169 aa).

Fe cation-binding residues include Cys92 and His134. The active site involves Glu135. Residue His138 participates in Fe cation binding.

Belongs to the polypeptide deformylase family. The cofactor is Fe(2+).

The enzyme catalyses N-terminal N-formyl-L-methionyl-[peptide] + H2O = N-terminal L-methionyl-[peptide] + formate. Functionally, removes the formyl group from the N-terminal Met of newly synthesized proteins. Requires at least a dipeptide for an efficient rate of reaction. N-terminal L-methionine is a prerequisite for activity but the enzyme has broad specificity at other positions. The polypeptide is Peptide deformylase 1 (Ralstonia nicotianae (strain ATCC BAA-1114 / GMI1000) (Ralstonia solanacearum)).